A 422-amino-acid chain; its full sequence is Testin (422 aa).

Residues 92-199 (MILTSPVAAK…GDVKLPKEVE (108 aa)) form the PET domain. Residues 135 to 165 (QPVAGSEGAQYRKKQLAKQLPAHDQDPSKCH) are disordered. Over residues 155–165 (PAHDQDPSKCH) the composition is skewed to basic and acidic residues. LIM zinc-binding domains follow at residues 234-299 (YYCF…SEKP), 300-359 (RCAG…NHAV), and 360-422 (SCQG…KMSS).

It belongs to the prickle / espinas / testin family.

Its subcellular location is the cytoplasm. It is found in the cell cortex. It localises to the cell junction. The protein localises to the focal adhesion. In terms of biological role, scaffold protein that may play a role in cell adhesion, cell spreading and in the reorganization of the actin cytoskeleton. May inhibit cell growth. Regulates cranial neural crest migration. Acts together with prickle1 to control axial elongation. This Xenopus tropicalis (Western clawed frog) protein is Testin.